A 329-amino-acid chain; its full sequence is MNQIDYLRISLIDRCNFRCQYCLPEDAELAYVRPQDLLTREEILTLVKNVFIPLGFRKFRLTGGEPLLHPEVVEIVRDIASLSATSDLALTTNGYLLDNLAEMLYEAGLRRINISLDSLDPDTFDKIIGNRGRSRWQKTWAGIQAAQRVGFDPLKLNVVVIPGINEAEVEDLAALTIEKRWHVRFIEFMPIGNGDLFQEKAWIANEELRGRIRAKWGLNEGQVRGNGPADVFQIPGAKGTIGFISQMSECFCDRCNRLRLSADGWLRPCLLNETGQIDLKTALRQGISPAEIRERVRELIELKAEINFKLRDSGTSSGIYTRTMSQIGG.

The Radical SAM core domain occupies 1-229 (MNQIDYLRIS…EGQVRGNGPA (229 aa)). R8 is a binding site for GTP. [4Fe-4S] cluster contacts are provided by C15 and C19. Y21 provides a ligand contact to S-adenosyl-L-methionine. C22 contacts [4Fe-4S] cluster. Position 60 (R60) interacts with GTP. Residue G64 coordinates S-adenosyl-L-methionine. T91 lines the GTP pocket. S115 provides a ligand contact to S-adenosyl-L-methionine. K155 lines the GTP pocket. Residue M189 participates in S-adenosyl-L-methionine binding. [4Fe-4S] cluster contacts are provided by C252 and C255. 257 to 259 (RLR) is a GTP binding site. Residue C269 participates in [4Fe-4S] cluster binding.

The protein belongs to the radical SAM superfamily. MoaA family. In terms of assembly, monomer and homodimer. Requires [4Fe-4S] cluster as cofactor.

It catalyses the reaction GTP + AH2 + S-adenosyl-L-methionine = (8S)-3',8-cyclo-7,8-dihydroguanosine 5'-triphosphate + 5'-deoxyadenosine + L-methionine + A + H(+). It participates in cofactor biosynthesis; molybdopterin biosynthesis. Functionally, catalyzes the cyclization of GTP to (8S)-3',8-cyclo-7,8-dihydroguanosine 5'-triphosphate. This is GTP 3',8-cyclase from Microcystis aeruginosa (strain NIES-843 / IAM M-2473).